A 338-amino-acid polypeptide reads, in one-letter code: Ketol-acid reductoisomerase (NADP(+)) (338 aa).

One can recognise a KARI N-terminal Rossmann domain in the interval 1 to 181 (MKVFYDKDCD…GGGKAGIIET (181 aa)). NADP(+)-binding positions include 24–27 (YGSQ), Arg-47, and Ser-52. His-107 is an active-site residue. An NADP(+)-binding site is contributed by Gly-133. The KARI C-terminal knotted domain occupies 182-327 (NFREETETDL…GKLRAMMPWI (146 aa)). The Mg(2+) site is built by Asp-190, Glu-194, Glu-226, and Glu-230. Residue Ser-251 coordinates substrate.

Belongs to the ketol-acid reductoisomerase family. Requires Mg(2+) as cofactor.

It catalyses the reaction (2R)-2,3-dihydroxy-3-methylbutanoate + NADP(+) = (2S)-2-acetolactate + NADPH + H(+). It carries out the reaction (2R,3R)-2,3-dihydroxy-3-methylpentanoate + NADP(+) = (S)-2-ethyl-2-hydroxy-3-oxobutanoate + NADPH + H(+). It participates in amino-acid biosynthesis; L-isoleucine biosynthesis; L-isoleucine from 2-oxobutanoate: step 2/4. Its pathway is amino-acid biosynthesis; L-valine biosynthesis; L-valine from pyruvate: step 2/4. Its function is as follows. Involved in the biosynthesis of branched-chain amino acids (BCAA). Catalyzes an alkyl-migration followed by a ketol-acid reduction of (S)-2-acetolactate (S2AL) to yield (R)-2,3-dihydroxy-isovalerate. In the isomerase reaction, S2AL is rearranged via a Mg-dependent methyl migration to produce 3-hydroxy-3-methyl-2-ketobutyrate (HMKB). In the reductase reaction, this 2-ketoacid undergoes a metal-dependent reduction by NADPH to yield (R)-2,3-dihydroxy-isovalerate. The protein is Ketol-acid reductoisomerase (NADP(+)) of Polaromonas naphthalenivorans (strain CJ2).